Consider the following 502-residue polypeptide: Probable malate:quinone oxidoreductase (502 aa).

The protein belongs to the MQO family. FAD serves as cofactor.

It catalyses the reaction (S)-malate + a quinone = a quinol + oxaloacetate. Its pathway is carbohydrate metabolism; tricarboxylic acid cycle; oxaloacetate from (S)-malate (quinone route): step 1/1. This Synechococcus sp. (strain CC9902) protein is Probable malate:quinone oxidoreductase.